The primary structure comprises 187 residues: Elongation factor P (187 aa).

This sequence belongs to the elongation factor P family.

It localises to the cytoplasm. It participates in protein biosynthesis; polypeptide chain elongation. Functionally, involved in peptide bond synthesis. Stimulates efficient translation and peptide-bond synthesis on native or reconstituted 70S ribosomes in vitro. Probably functions indirectly by altering the affinity of the ribosome for aminoacyl-tRNA, thus increasing their reactivity as acceptors for peptidyl transferase. The sequence is that of Elongation factor P from Fusobacterium nucleatum subsp. nucleatum (strain ATCC 25586 / DSM 15643 / BCRC 10681 / CIP 101130 / JCM 8532 / KCTC 2640 / LMG 13131 / VPI 4355).